A 332-amino-acid polypeptide reads, in one-letter code: MKTPFTILAALTVATTLADVPDEWDIIELSFGEPTSVDSGEIKFAMCPKTECPNVESEEEFKAAIKAKRAKGKKVLLSIGGQNGQVQLKTTEARDKFVSSVGGIIDKYGLDGLDIDFEGHSLYLDQGDTDFKNPKTSVVVNLIAALKSLKEKYGKAFVLTMAPETFFVQLGYSSYGPSNGNDARAGSYLPVIHAMRDDLTVLQVQNYNSGPIIGLDDQYHNVGTPDFLIAMADMLKAGFPVAKTNNTFPPLREDQIAIGLPSTVSAGNGFVDEKGVQDALNCLMKGESCGTYKPRGGKSPSFRGLMAWSINWDKFSNWGFLNPHRKYLDSFP.

A signal peptide spans 1–18 (MKTPFTILAALTVATTLA). The GH18 domain maps to 19-331 (DVPDEWDIIE…NPHRKYLDSF (313 aa)). The active-site Proton donor is the Glu118. Asn245 carries an N-linked (GlcNAc...) asparagine glycan.

Belongs to the glycosyl hydrolase 18 family. Chitinase class II subfamily.

The protein resides in the secreted. The enzyme catalyses Random endo-hydrolysis of N-acetyl-beta-D-glucosaminide (1-&gt;4)-beta-linkages in chitin and chitodextrins.. In terms of biological role, degrades chitin and chitotriose. The sequence is that of Probable class II chitinase ARB_00204 from Arthroderma benhamiae (strain ATCC MYA-4681 / CBS 112371) (Trichophyton mentagrophytes).